Here is a 57-residue protein sequence, read N- to C-terminus: DNA gyrase inhibitor YacG (57 aa).

4 residues coordinate Zn(2+): Cys10, Cys13, Cys25, and Cys29.

It belongs to the DNA gyrase inhibitor YacG family. Interacts with GyrB. Zn(2+) serves as cofactor.

Functionally, inhibits all the catalytic activities of DNA gyrase by preventing its interaction with DNA. Acts by binding directly to the C-terminal domain of GyrB, which probably disrupts DNA binding by the gyrase. The protein is DNA gyrase inhibitor YacG of Brucella abortus (strain 2308).